Reading from the N-terminus, the 382-residue chain is Leucoanthocyanidin reductase (382 aa).

NADP(+)-binding positions include 19–25 (GGTGFIG), Arg-44, and Lys-52. Lys-142 functions as the Proton acceptor in the catalytic mechanism. An NADP(+)-binding site is contributed by Arg-146.

This sequence belongs to the NmrA-type oxidoreductase family. Isoflavone reductase subfamily. Monomer.

The enzyme catalyses (2R,3S)-catechin + NADP(+) + H2O = (2R,3S,4S)-leucocyanidin + NADPH + H(+). The protein operates within flavonoid metabolism; proanthocyanidin biosynthesis. Its function is as follows. Catalyzes the synthesis of catechin from 3,4-cis-leucocyanidin. Also synthesizes afzelechin and gallocatechin. This Desmodium uncinatum (Silverleaf Spanish clover) protein is Leucoanthocyanidin reductase (LAR).